A 60-amino-acid chain; its full sequence is CLISPTVQNGNVLSFFCFVEENNCPEGFKCCPLTNVTHPPNKAHKGCCAKYRGTVEKPKQ.

The protein belongs to the scutigerotoxin-02 family. In terms of processing, contains 3 disulfide bonds. Expressed by the venom gland.

It localises to the secreted. The protein is U-scutigerotoxin(02)-Tl4a of Thereuopoda longicornis (Long-legged centipede).